The following is a 110-amino-acid chain: Histone H2A.1 (110 aa).

Belongs to the histone H2A family. In terms of assembly, the nucleosome is a histone octamer containing two molecules each of H2A, H2B, H3 and H4 assembled in one H3-H4 heterotetramer and two H2A-H2B heterodimers. The octamer wraps approximately 147 bp of DNA. As to expression, expressed in the generative cell within the bicellular pollen. Not detected in other reproductive or vegetative tissues.

Its subcellular location is the nucleus. The protein localises to the chromosome. Functionally, core component of nucleosome. Nucleosomes wrap and compact DNA into chromatin, limiting DNA accessibility to the cellular machineries which require DNA as a template. Histones thereby play a central role in transcription regulation, DNA repair, DNA replication and chromosomal stability. DNA accessibility is regulated via a complex set of post-translational modifications of histones, also called histone code, and nucleosome remodeling. This Lilium longiflorum (Trumpet lily) protein is Histone H2A.1 (gcH2A).